The primary structure comprises 80 residues: Cytochrome c oxidase subunit 7B, mitochondrial (80 aa).

Residues 1–24 constitute a mitochondrion transit peptide; it reads MFPLVKSALNRLQVRSIQQTMARQ. Over 25 to 32 the chain is Mitochondrial matrix; sequence SHQKRTPD. The chain crosses the membrane as a helical span at residues 33–59; it reads FHDKYGNAVLASGATFCIVTWTYVATQ. Over 60 to 80 the chain is Mitochondrial intermembrane; it reads VGIEWNLSPVGRVTPKEWRNQ.

Belongs to the cytochrome c oxidase VIIb family. Component of the cytochrome c oxidase (complex IV, CIV), a multisubunit enzyme composed of 14 subunits. The complex is composed of a catalytic core of 3 subunits MT-CO1, MT-CO2 and MT-CO3, encoded in the mitochondrial DNA, and 11 supernumerary subunits COX4I1 (or COX4I2), COX5A, COX5B, COX6A1 (or COX6A2), COX6B1 (or COX6B2), COX6C, COX7A2 (or COX7A1), COX7B, COX7C, COX8A and NDUFA4, which are encoded in the nuclear genome. The complex exists as a monomer or a dimer and forms supercomplexes (SCs) in the inner mitochondrial membrane with NADH-ubiquinone oxidoreductase (complex I, CI) and ubiquinol-cytochrome c oxidoreductase (cytochrome b-c1 complex, complex III, CIII), resulting in different assemblies (supercomplex SCI(1)III(2)IV(1) and megacomplex MCI(2)III(2)IV(2)).

The protein localises to the mitochondrion inner membrane. It functions in the pathway energy metabolism; oxidative phosphorylation. Functionally, component of the cytochrome c oxidase, the last enzyme in the mitochondrial electron transport chain which drives oxidative phosphorylation. The respiratory chain contains 3 multisubunit complexes succinate dehydrogenase (complex II, CII), ubiquinol-cytochrome c oxidoreductase (cytochrome b-c1 complex, complex III, CIII) and cytochrome c oxidase (complex IV, CIV), that cooperate to transfer electrons derived from NADH and succinate to molecular oxygen, creating an electrochemical gradient over the inner membrane that drives transmembrane transport and the ATP synthase. Cytochrome c oxidase is the component of the respiratory chain that catalyzes the reduction of oxygen to water. Electrons originating from reduced cytochrome c in the intermembrane space (IMS) are transferred via the dinuclear copper A center (CU(A)) of subunit 2 and heme A of subunit 1 to the active site in subunit 1, a binuclear center (BNC) formed by heme A3 and copper B (CU(B)). The BNC reduces molecular oxygen to 2 water molecules using 4 electrons from cytochrome c in the IMS and 4 protons from the mitochondrial matrix. Plays a role in proper central nervous system (CNS) development in vertebrates. This chain is Cytochrome c oxidase subunit 7B, mitochondrial (COX7B), found in Homo sapiens (Human).